The following is a 345-amino-acid chain: MSSKKRTKRNRAGDEYKEHKGRSHPRRKFLPPEEPDVSRISKVAGVNQLEELCDSFDQPLHSTAVDACGEEHSENESSGYVPAPQRTNAERSEKMLLETPEGDVHEFSQSGSVREPLMENLNAPNTTRSEVKKKRPSKKSSSDSSVNSPSSVQLWCPNKLKRSSRDITELDVVLAEFEKIAANYRQSIESKACRKAVSAFCSAFEDQVTDLITEVQELKNTKKKNAKVVADIKKKRQRLMQVREKLSRTEPQLIKLQKEYAEVEERRSSLRQVVQFLTDLKELQQDYLDYREENPRKKVVYGASSLPALLVESRRILQAERHFQNINRKLEYALEVQRGKLAKEH.

Composition is skewed to basic residues over residues 1–10 (MSSKKRTKRN) and 19–29 (HKGRSHPRRKF). Disordered regions lie at residues 1 to 37 (MSSK…EPDV) and 64 to 153 (AVDA…SSVQ). The segment covering 88–106 (NAERSEKMLLETPEGDVHE) has biased composition (basic and acidic residues). Residues 142–152 (SDSSVNSPSSV) show a composition bias toward low complexity. The stretch at 201-294 (CSAFEDQVTD…QDYLDYREEN (94 aa)) forms a coiled coil. The Nuclear localization signal signature appears at 222–239 (KKKNAKVVADIKKKRQRL).

It belongs to the CENP-U/AME1 family. Interacts with CENPH-CENPI complex at the kinetochore.

It localises to the nucleus. The protein localises to the chromosome. Its subcellular location is the centromere. Its function is as follows. Probable component of a centromeric complex involved in assembly of kinetochore proteins, mitotic progression and chromosome segregation. Required for maintenance of sister chromatid adhesion during mitotic checkpoint activation. This Gallus gallus (Chicken) protein is Centromere protein U (CENPU).